The chain runs to 132 residues: Small ribosomal subunit protein uS8 (132 aa).

This sequence belongs to the universal ribosomal protein uS8 family. In terms of assembly, part of the 30S ribosomal subunit. Contacts proteins S5 and S12.

In terms of biological role, one of the primary rRNA binding proteins, it binds directly to 16S rRNA central domain where it helps coordinate assembly of the platform of the 30S subunit. This is Small ribosomal subunit protein uS8 from Xanthomonas euvesicatoria pv. vesicatoria (strain 85-10) (Xanthomonas campestris pv. vesicatoria).